Here is a 120-residue protein sequence, read N- to C-terminus: Large ribosomal subunit protein bL36m (120 aa).

This sequence belongs to the bacterial ribosomal protein bL36 family. Component of the mitochondrial ribosome large subunit (39S) which comprises a 16S rRNA and about 50 distinct proteins.

Its subcellular location is the mitochondrion. The chain is Large ribosomal subunit protein bL36m (mrpl36) from Osmerus mordax (Rainbow smelt).